Here is a 267-residue protein sequence, read N- to C-terminus: Hydroxyethylthiazole kinase (267 aa).

Substrate is bound at residue Met-48. Residues Arg-124 and Ser-170 each contribute to the ATP site. Gly-197 contributes to the substrate binding site.

It belongs to the Thz kinase family. Requires Mg(2+) as cofactor.

The catalysed reaction is 5-(2-hydroxyethyl)-4-methylthiazole + ATP = 4-methyl-5-(2-phosphooxyethyl)-thiazole + ADP + H(+). It participates in cofactor biosynthesis; thiamine diphosphate biosynthesis; 4-methyl-5-(2-phosphoethyl)-thiazole from 5-(2-hydroxyethyl)-4-methylthiazole: step 1/1. In terms of biological role, catalyzes the phosphorylation of the hydroxyl group of 4-methyl-5-beta-hydroxyethylthiazole (THZ). This is Hydroxyethylthiazole kinase from Leptospira biflexa serovar Patoc (strain Patoc 1 / Ames).